The primary structure comprises 425 residues: Dihydroorotase (425 aa).

2 residues coordinate Zn(2+): His-56 and His-58. Residues 58–60 and Asn-90 contribute to the substrate site; that span reads HYR. Positions 148, 175, and 228 each coordinate Zn(2+). A substrate-binding site is contributed by Asn-274. Residue Asp-301 participates in Zn(2+) binding. The active site involves Asp-301. Residues His-305 and 319–320 each bind substrate; that span reads FG.

It belongs to the metallo-dependent hydrolases superfamily. DHOase family. Class I DHOase subfamily. Zn(2+) serves as cofactor.

The enzyme catalyses (S)-dihydroorotate + H2O = N-carbamoyl-L-aspartate + H(+). It participates in pyrimidine metabolism; UMP biosynthesis via de novo pathway; (S)-dihydroorotate from bicarbonate: step 3/3. Functionally, catalyzes the reversible cyclization of carbamoyl aspartate to dihydroorotate. The polypeptide is Dihydroorotase (Lactobacillus helveticus (strain DPC 4571)).